The chain runs to 657 residues: Putative GreA-associated domains protein (657 aa).

Residues 1–152 form the GRAD2 domain; that stretch reads MDTRDLTAYS…EQEGNKEKAT (152 aa). The GRAD1 domain occupies 153-657; the sequence is EFYKKALYRF…TAGSFGTLWE (505 aa).

The chain is Putative GreA-associated domains protein from Treponema pallidum (strain Nichols).